The primary structure comprises 404 residues: Mitochondrial potassium channel (404 aa).

The N-terminal 30 residues, 1-30, are a transit peptide targeting the mitochondrion; that stretch reads MTGRSRVLAMRHVGGVSPVLVRRDLFLTRT. The Mitochondrial matrix segment spans residues 31–196; the sequence is LCSHGPSQPR…KERTRAERTK (166 aa). Serine 65 bears the Phosphoserine mark. The stretch at 111–138 forms a coiled coil; sequence VREAREDLESQQTKLKEVRDRLDRISRD. A helical transmembrane segment spans residues 197 to 217; that stretch reads NWSLIGSVLGALIGVAGSTYV. Residues 218-380 lie on the Mitochondrial intermembrane side of the membrane; it reads NRVRLQELKA…LEAQVNRNTV (163 aa). Residues 381–401 traverse the membrane as a helical segment; that stretch reads YGTLVTCATFVAVLPVLYMLF. Topologically, residues 402–404 are mitochondrial matrix; sequence RAS.

The mitochondrial potassium channel (mitoK(ATP)) forms a heteromultimer.

It localises to the mitochondrion inner membrane. The catalysed reaction is K(+)(in) = K(+)(out). Its activity is regulated as follows. Channel activity inhibited by ATP via ABCB8/MITOSUR subunit. In terms of biological role, pore-forming subunit of the mitochondrial ATP-gated potassium channel (mitoK(ATP)). Together with ATP-binding subunit ABCB8/MITOSUR of the mitoK(ATP) channel, mediates ATP-dependent K(+) currents across the mitochondrial inner membrane. An increase in ATP intracellular levels closes the channel, inhibiting K(+) transport, whereas a decrease in ATP levels enhances K(+) uptake in the mitochondrial matrix. May contribute to the homeostatic control of cellular metabolism under stress conditions by regulating the mitochondrial matrix volume. This is Mitochondrial potassium channel from Bos taurus (Bovine).